Consider the following 175-residue polypeptide: NADH-ubiquinone oxidoreductase chain 6 (175 aa).

5 consecutive transmembrane segments (helical) span residues 1-21 (MVTY…VGVS), 25-45 (SPIY…GVVL), 47-67 (FGGS…MLVV), 88-108 (VVLG…IYAL), and 149-169 (YGVW…VIIM).

It belongs to the complex I subunit 6 family. In terms of assembly, core subunit of respiratory chain NADH dehydrogenase (Complex I) which is composed of 45 different subunits.

It localises to the mitochondrion inner membrane. It catalyses the reaction a ubiquinone + NADH + 5 H(+)(in) = a ubiquinol + NAD(+) + 4 H(+)(out). Its function is as follows. Core subunit of the mitochondrial membrane respiratory chain NADH dehydrogenase (Complex I) which catalyzes electron transfer from NADH through the respiratory chain, using ubiquinone as an electron acceptor. Essential for the catalytic activity and assembly of complex I. The polypeptide is NADH-ubiquinone oxidoreductase chain 6 (MT-ND6) (Balaenoptera musculus (Blue whale)).